A 373-amino-acid polypeptide reads, in one-letter code: MKSGRYIGVMSGTSLDGVDVVMAVIDENMVAQQARYHHPMPQALRQQILAVCQGQSLTLSQLGQLDTRLGRLFAEAVLALLKQQGLSGEEITAIGCHGQTVWHEPQGEAPNTLQIGDNNQIAALTGITVVGDFRRRDMALGGQGAPLVPAFHHAVLMHPAERRMVLNIGGIANLSLLLPGRELRGFDTGPGNMLLDAWIWRQQGKAYDKDGAWGAGGQIVWPLLKQMLSDPYFALSAPKSTGREYFNLGWLEQQLHSFPGLPAQDVQATLTELTATTIAQQVLLSGGCDRLLVCGGGGKNQLLMTRLAAQLAGIEVTSTDKAGISGDDMEALAFAWLAWRTLSGLPGNLPSVTGARAASVIGAIYPANRSLPL.

Residue 12-19 participates in ATP binding; that stretch reads GTSLDGVD.

This sequence belongs to the anhydro-N-acetylmuramic acid kinase family.

It carries out the reaction 1,6-anhydro-N-acetyl-beta-muramate + ATP + H2O = N-acetyl-D-muramate 6-phosphate + ADP + H(+). It functions in the pathway amino-sugar metabolism; 1,6-anhydro-N-acetylmuramate degradation. The protein operates within cell wall biogenesis; peptidoglycan recycling. Functionally, catalyzes the specific phosphorylation of 1,6-anhydro-N-acetylmuramic acid (anhMurNAc) with the simultaneous cleavage of the 1,6-anhydro ring, generating MurNAc-6-P. Is required for the utilization of anhMurNAc either imported from the medium or derived from its own cell wall murein, and thus plays a role in cell wall recycling. In Erwinia tasmaniensis (strain DSM 17950 / CFBP 7177 / CIP 109463 / NCPPB 4357 / Et1/99), this protein is Anhydro-N-acetylmuramic acid kinase.